An 819-amino-acid polypeptide reads, in one-letter code: Leucine--tRNA ligase (819 aa).

The short motif at 42-53 (PYPSGAKLHIGH) is the 'HIGH' region element. The 'KMSKS' region signature appears at 578-582 (RMSKS). Lysine 581 contacts ATP.

This sequence belongs to the class-I aminoacyl-tRNA synthetase family.

The protein localises to the cytoplasm. It carries out the reaction tRNA(Leu) + L-leucine + ATP = L-leucyl-tRNA(Leu) + AMP + diphosphate. The chain is Leucine--tRNA ligase from Caldanaerobacter subterraneus subsp. tengcongensis (strain DSM 15242 / JCM 11007 / NBRC 100824 / MB4) (Thermoanaerobacter tengcongensis).